The sequence spans 583 residues: 2-succinyl-5-enolpyruvyl-6-hydroxy-3-cyclohexene-1-carboxylate synthase (583 aa).

It belongs to the TPP enzyme family. MenD subfamily. Homodimer. The cofactor is Mg(2+). Requires Mn(2+) as cofactor. Thiamine diphosphate serves as cofactor.

The enzyme catalyses isochorismate + 2-oxoglutarate + H(+) = 5-enolpyruvoyl-6-hydroxy-2-succinyl-cyclohex-3-ene-1-carboxylate + CO2. It participates in quinol/quinone metabolism; 1,4-dihydroxy-2-naphthoate biosynthesis; 1,4-dihydroxy-2-naphthoate from chorismate: step 2/7. It functions in the pathway quinol/quinone metabolism; menaquinone biosynthesis. Catalyzes the thiamine diphosphate-dependent decarboxylation of 2-oxoglutarate and the subsequent addition of the resulting succinic semialdehyde-thiamine pyrophosphate anion to isochorismate to yield 2-succinyl-5-enolpyruvyl-6-hydroxy-3-cyclohexene-1-carboxylate (SEPHCHC). The chain is 2-succinyl-5-enolpyruvyl-6-hydroxy-3-cyclohexene-1-carboxylate synthase from Chlorobaculum parvum (strain DSM 263 / NCIMB 8327) (Chlorobium vibrioforme subsp. thiosulfatophilum).